The primary structure comprises 225 residues: Endonuclease V (225 aa).

The Mg(2+) site is built by Asp-43 and Asp-110.

Belongs to the endonuclease V family. Mg(2+) serves as cofactor.

Its subcellular location is the cytoplasm. It carries out the reaction Endonucleolytic cleavage at apurinic or apyrimidinic sites to products with a 5'-phosphate.. Its function is as follows. DNA repair enzyme involved in the repair of deaminated bases. Selectively cleaves double-stranded DNA at the second phosphodiester bond 3' to a deoxyinosine leaving behind the intact lesion on the nicked DNA. The chain is Endonuclease V from Thermotoga neapolitana (strain ATCC 49049 / DSM 4359 / NBRC 107923 / NS-E).